The chain runs to 416 residues: 3-oxoacyl-[acyl-carrier-protein] synthase 1 (416 aa).

One can recognise a Ketosynthase family 3 (KS3) domain in the interval 11 to 415; the sequence is FPSVVVTAVT…GHNVALAFGR (405 aa). Active-site for beta-ketoacyl synthase activity residues include Cys171, His311, and His345. Substrate contacts are provided by His311 and His345.

This sequence belongs to the thiolase-like superfamily. Beta-ketoacyl-ACP synthases family.

Its subcellular location is the cytoplasm. The enzyme catalyses an ultra-long-chain mono-unsaturated fatty acyl-[ACP] + malonyl-[ACP] + H(+) = a 3-oxo-ultra-long-chain mono-unsaturated fatty acyl-[ACP] + holo-[ACP] + CO2. Its pathway is lipid metabolism; mycolic acid biosynthesis. Part of the mycobacterial fatty acid elongation system FAS-II, which is involved in mycolic acid biosynthesis. Catalyzes the elongation of long chain acyl-ACP substrates by the addition of two carbons from malonyl-ACP to an acyl acceptor. Involved in the initial extension of the mycolate chain and forms monounsaturated fatty acids that averaged 40 carbons in length. This Mycobacterium tuberculosis (strain ATCC 35801 / TMC 107 / Erdman) protein is 3-oxoacyl-[acyl-carrier-protein] synthase 1 (kasA).